We begin with the raw amino-acid sequence, 164 residues long: Photosystem II extrinsic protein V (164 aa).

An N-terminal signal peptide occupies residues 1–27 (MIPNRKIQLSLFAVIIVFETLLNQVYA). Heme c contacts are provided by cysteine 64, cysteine 67, histidine 68, and methionine 131.

The protein belongs to the cytochrome c family. PsbV subfamily. As to quaternary structure, PSII is composed of 1 copy each of membrane proteins PsbA, PsbB, PsbC, PsbD, PsbE, PsbF, PsbH, PsbI, PsbJ, PsbK, PsbL, PsbM, PsbT, PsbY, PsbZ, Psb30/Ycf12, at least 3 peripheral proteins of the oxygen-evolving complex and a large number of cofactors. It forms dimeric complexes. The extrinsic subunits in red algae are PsbO (OEC33), PsbQ', cytochrome c-550 and PsbU. It depends on heme c as a cofactor.

It localises to the plastid. It is found in the chloroplast thylakoid membrane. Functionally, one of the extrinsic, lumenal subunits of photosystem II (PSII). PSII is a light-driven water plastoquinone oxidoreductase, using light energy to abstract electrons from H(2)O, generating a proton gradient subsequently used for ATP formation. The extrinsic proteins stabilize the structure of photosystem II oxygen-evolving complex (OEC), the ion environment of oxygen evolution and protect the OEC against heat-induced inactivation. The polypeptide is Photosystem II extrinsic protein V (Gracilaria tenuistipitata var. liui (Red alga)).